Here is a 447-residue protein sequence, read N- to C-terminus: Ribosomal protein uS12 methylthiotransferase RimO (447 aa).

Residues 4-114 (PKVGFVSLGC…VMEAVHEYVP (111 aa)) form the MTTase N-terminal domain. 6 residues coordinate [4Fe-4S] cluster: C13, C49, C78, C147, C151, and C154. A Radical SAM core domain is found at 133–370 (LTPKHYAYLK…MQVQQQISAA (238 aa)). The region spanning 373–443 (QKRIGQTMTV…EYDLFAKLIK (71 aa)) is the TRAM domain.

This sequence belongs to the methylthiotransferase family. RimO subfamily. [4Fe-4S] cluster is required as a cofactor.

Its subcellular location is the cytoplasm. The enzyme catalyses L-aspartate(89)-[ribosomal protein uS12]-hydrogen + (sulfur carrier)-SH + AH2 + 2 S-adenosyl-L-methionine = 3-methylsulfanyl-L-aspartate(89)-[ribosomal protein uS12]-hydrogen + (sulfur carrier)-H + 5'-deoxyadenosine + L-methionine + A + S-adenosyl-L-homocysteine + 2 H(+). Functionally, catalyzes the methylthiolation of an aspartic acid residue of ribosomal protein uS12. The polypeptide is Ribosomal protein uS12 methylthiotransferase RimO (Acinetobacter baumannii (strain AB0057)).